The primary structure comprises 196 residues: Auxin-induced protein 22B (196 aa).

Positions 18–22 (LRLGL) match the EAR-like (transcriptional repression) motif. A disordered region spans residues 44 to 74 (RQVRETSQDSVSISKASHHQQHVETVSAPPP). The region spanning 99–186 (GIFVKVSMDG…SCKRLRIMKG (88 aa)) is the PB1 domain.

This sequence belongs to the Aux/IAA family. As to quaternary structure, homodimers and heterodimers.

Its subcellular location is the nucleus. In terms of biological role, aux/IAA proteins are short-lived transcriptional factors that function as repressors of early auxin response genes at low auxin concentrations. Repression is thought to result from the interaction with auxin response factors (ARFs), proteins that bind to the auxin-responsive promoter element (AuxRE). Formation of heterodimers with ARF proteins may alter their ability to modulate early auxin response genes expression. The polypeptide is Auxin-induced protein 22B (AUX22B) (Vigna radiata var. radiata (Mung bean)).